A 227-amino-acid chain; its full sequence is Deoxyribose-phosphate aldolase (227 aa).

Catalysis depends on aspartate 84, which acts as the Proton donor/acceptor. The active-site Schiff-base intermediate with acetaldehyde is lysine 146. Lysine 188 functions as the Proton donor/acceptor in the catalytic mechanism.

The protein belongs to the DeoC/FbaB aldolase family. DeoC type 1 subfamily.

The protein resides in the cytoplasm. The catalysed reaction is 2-deoxy-D-ribose 5-phosphate = D-glyceraldehyde 3-phosphate + acetaldehyde. The protein operates within carbohydrate degradation; 2-deoxy-D-ribose 1-phosphate degradation; D-glyceraldehyde 3-phosphate and acetaldehyde from 2-deoxy-alpha-D-ribose 1-phosphate: step 2/2. Functionally, catalyzes a reversible aldol reaction between acetaldehyde and D-glyceraldehyde 3-phosphate to generate 2-deoxy-D-ribose 5-phosphate. This Pyrobaculum islandicum (strain DSM 4184 / JCM 9189 / GEO3) protein is Deoxyribose-phosphate aldolase.